The following is a 180-amino-acid chain: UPF0397 protein SSA_0592 (180 aa).

5 consecutive transmembrane segments (helical) span residues 9–29 (VVATGIGAALFVVIGMINIPT), 45–65 (LFSVIFGPIVGFLMGFIGHAI), 72–92 (GGLWWFWIAGSGVFGLLVGFF), 113–133 (LIQFGANAIAWLIGPIGDVIV), and 146–166 (IVAILVNSATVAVIGTVLLTA).

The protein belongs to the UPF0397 family.

The protein resides in the cell membrane. This chain is UPF0397 protein SSA_0592, found in Streptococcus sanguinis (strain SK36).